The sequence spans 266 residues: GTP cyclohydrolase FolE2 (266 aa).

Belongs to the GTP cyclohydrolase IV family.

It carries out the reaction GTP + H2O = 7,8-dihydroneopterin 3'-triphosphate + formate + H(+). It functions in the pathway cofactor biosynthesis; 7,8-dihydroneopterin triphosphate biosynthesis; 7,8-dihydroneopterin triphosphate from GTP: step 1/1. In terms of biological role, converts GTP to 7,8-dihydroneopterin triphosphate. The sequence is that of GTP cyclohydrolase FolE2 from Burkholderia mallei (strain ATCC 23344).